We begin with the raw amino-acid sequence, 339 residues long: Bifunctional phosphoglucose/phosphomannose isomerase (339 aa).

The region spanning 22-164 is the SIS domain; sequence ISVNVKAEDI…IEPVDDQIEE (143 aa). Gly-41, Ser-42, Ser-83, Ser-85, Thr-88, and Arg-135 together coordinate D-fructose 6-phosphate. Residue Glu-221 is the Proton acceptor of the active site. 2 residues coordinate D-fructose 6-phosphate: His-237 and Lys-331. His-237 (proton donor) is an active-site residue. The Proton acceptor role is filled by Lys-331.

Belongs to the PGI/PMI family. As to quaternary structure, homodimer.

It catalyses the reaction alpha-D-glucose 6-phosphate = beta-D-fructose 6-phosphate. The catalysed reaction is D-mannose 6-phosphate = D-fructose 6-phosphate. Functionally, dual specificity isomerase that catalyzes the isomerization of both glucose-6-phosphate and mannose-6-phosphate to fructose-6-phosphate. The polypeptide is Bifunctional phosphoglucose/phosphomannose isomerase (Caldicellulosiruptor bescii (strain ATCC BAA-1888 / DSM 6725 / KCTC 15123 / Z-1320) (Anaerocellum thermophilum)).